The sequence spans 165 residues: GTP-dependent dephospho-CoA kinase (165 aa).

The GTP site is built by D44, V45, D63, K65, E115, and D138.

The protein belongs to the GTP-dependent DPCK family.

The enzyme catalyses 3'-dephospho-CoA + GTP = GDP + CoA + H(+). It participates in cofactor biosynthesis; coenzyme A biosynthesis. Functionally, catalyzes the GTP-dependent phosphorylation of the 3'-hydroxyl group of dephosphocoenzyme A to form coenzyme A (CoA). This Picrophilus torridus (strain ATCC 700027 / DSM 9790 / JCM 10055 / NBRC 100828 / KAW 2/3) protein is GTP-dependent dephospho-CoA kinase.